Here is a 493-residue protein sequence, read N- to C-terminus: Transmembrane protein 145 (493 aa).

A helical transmembrane segment spans residues 9–29 (LRRLLPPLLLLLLSLPPRARA). The N-linked (GlcNAc...) asparagine glycan is linked to N35. The next 7 membrane-spanning stretches (helical) occupy residues 175–195 (VTFL…GYLL), 207–227 (MFMA…IYWG), 241–261 (ILAK…LILL), 282–302 (VYMT…AEFF), 318–338 (GLIG…LVSL), 349–369 (VPFF…ALIA), and 381–401 (IVNG…LIMT). N444 is a glycosylation site (N-linked (GlcNAc...) asparagine). Residues 464–493 (PATSPLPRAAPDSGLPLFRDLRPPGPLRDL) form a disordered region.

Its subcellular location is the membrane. The polypeptide is Transmembrane protein 145 (TMEM145) (Homo sapiens (Human)).